A 194-amino-acid chain; its full sequence is UPF0215 protein PF2042 (194 aa).

This sequence belongs to the UPF0215 family.

In Pyrococcus furiosus (strain ATCC 43587 / DSM 3638 / JCM 8422 / Vc1), this protein is UPF0215 protein PF2042.